The primary structure comprises 1082 residues: MSGNMDEAVSGNMDEAVSAGKDVRIARWVATIAGLLGFVLSVSIPLLPVTQTTATLNWPQQGRLDNVTAPLISQAPLELTATVPCSVVRDLPPEGGLVFGTAPAEGRDAALNAMLVNVTETRVDVIVRNVVVASVNRDRVAGPDCQRIEITSNLDGTYADFVGLTQISGEDAGKLQRTGYPDPNLRPAIVGVFTDLTGPAPQGLSVSAEIDTRFTTHPTALKLAAMLLAIVSTVIALLALWRLDRLDGRRMHRLIPTRWRTVTAVDGVVVGGMAIWYVIGANSSDDGYILQMARTAEHAGYMANYFRWFGSPEDPFGWYYNVLALMTKVSDASIWIRLPDLICALICWLLLSREVLPRLGPAVAGSRAAMWAAGLVLLGAWMPFNNGLRPEGQIATGALITYVLIERAVTSGRLTPAALAITTAAFTLGIQPTGLIAVAALLAGGRPILRIVIRRRRLDGTWPLIAPLLAAGTVILAVVFADQTIATVLEATRIRTAIGPSQEWWTEKLRYYYLILPTTDGAISRRVAFVFTAMCLFPSLFMMLRRKHIAGVARGPAWRLMGIIFATMFFLMFTPTKWTHHFGLFAAVGGAMAALATVLVSPTVLRSARNRMAFLSLVLFVLAFCFASTNGWWYVSNFGAPFNNSVPKVGGVQISAIFFALSAIAALWAFWLHLTRRTESRVVDRLTAAPIPVAAGFMVVVMMASMAIGVVRQYPTYSNGWANIRAFAGGCGLADDVLVEPDSNAGFLTPLPGAYGPLGPLGGEDPQGFSPDGVPDRIIAEAIRLNNPQPGTDYDWNRPIKLDEPGINGSTVPLPYGLDPKRVPVAGTYSTEAQQESRLSSAWYELPARDETERAAHPLVVITAAGTITGESVANGLTTGQTVDLEYATRGPDGTLVPAGRVTPYDVGPTPSWRNLRYPRSEIPDDAVAVRVVAEDLSLSQGDWIAVTPPRVPELQSVQEYVGSDQPVLMDWAVGLAFPCQQPMLHANGVTEVPKFRISPDYYAKLQSTDTWQDGINGGLLGITDLLLRASVMSTYLSQDWGQDWGSLRKFDTVVEATPAELDFGSQTHSGLYSPGPLRIRP.

13 helical membrane-spanning segments follow: residues 28 to 50 (WVAT…LPVT), 223 to 241 (LAAM…LALW), 262 to 281 (VTAV…VIGA), 333 to 352 (SIWI…LLLS), 359 to 381 (LGPA…LGAW), 420 to 442 (AITT…AALL), 462 to 481 (WPLI…VVFA), 522 to 544 (AISR…FMML), 557 to 574 (AWRL…LMFT), 578 to 600 (WTHH…TVLV), 613 to 635 (AFLS…WWYV), 650 to 672 (GGVQ…AFWL), and 689 to 711 (APIP…IGVV).

The protein belongs to the emb family.

The protein resides in the cell membrane. Arabinosyl transferase responsible for the polymerization of arabinose into the arabinan of arabinogalactan. The protein is Probable arabinosyltransferase B (embB) of Mycolicibacterium smegmatis (Mycobacterium smegmatis).